We begin with the raw amino-acid sequence, 153 residues long: ORM1-like protein 3 (153 aa).

The important for ceramide level-sensing stretch occupies residues 1 to 17 (MNVGTAHSEVNPNTRVM). The Cytoplasmic segment spans residues 1–21 (MNVGTAHSEVNPNTRVMNSRG). 2 helical membrane-spanning segments follow: residues 22-42 (IWLS…SIPF) and 43-63 (VSVP…MYIF). Topologically, residues 64 to 94 (LHTVKGTPFETPDQGKARLLTHWEQMDYGVQ) are cytoplasmic. Residues 95 to 117 (FTASRKFLTITPIVLYFLTSFYT) traverse the membrane as a helical segment. The Extracellular segment spans residues 118–121 (KYDQ). The chain crosses the membrane as a helical span at residues 122 to 142 (VHFILNTVSLMSVLIPKLPQL). Pro137 carries the hydroxyproline modification. The Cytoplasmic portion of the chain corresponds to 143-153 (HGVRIFGINKY).

It belongs to the ORM family. In terms of assembly, ceramide-sensitive subunit of the serine palmitoyltransferase (SPT) complex, which is also composed of SPTLC1, SPTLC2/3 and SPTSSA/B. In terms of processing, when hydroxylated at Pro-137, ubiquitinated via 'Lys-48'-linkage, leading to proteasomal degradation. In endothelial cells, ORMDL3 proteasomal degradation is controlled by the sphingosine 1-phosphate receptor signaling pathway.

Its subcellular location is the endoplasmic reticulum membrane. Its function is as follows. Plays an essential role in the homeostatic regulation of sphingolipid de novo biosynthesis by modulating the activity of the serine palmitoyltransferase (SPT) in response to ceramide levels. When complexed to SPT, the binding of ceramides to its N-terminus stabilizes a conformation that block SPT substrate entry, hence preventing SPT catalytic activity. Through this mechanism, maintains ceramide levels at sufficient concentrations for the production of complex sphingolipids, but which prevents the accumulation of ceramides to levels that trigger apoptosis. The polypeptide is ORM1-like protein 3 (Ormdl3) (Rattus norvegicus (Rat)).